The primary structure comprises 416 residues: PRKCA-binding protein (416 aa).

A PDZ domain is found at 22 to 105 (KVTLQKDAQN…EVTIHYNKLQ (84 aa)). Zn(2+)-binding residues include C44 and C46. T82 bears the Phosphothreonine mark. The AH domain maps to 144–357 (LCNDGLVKRL…CYAVLRDADV (214 aa)). The tract at residues 373–416 (PNQGGFTDGEDEEEEEEDGAAREVSKDARGATGPTDKGGSWCDS) is disordered. Positions 380–390 (DGEDEEEEEED) are enriched in acidic residues. A compositionally biased stretch (basic and acidic residues) spans 391–401 (GAAREVSKDAR). C414 is lipidated: S-palmitoyl cysteine; by DHHC8.

As to quaternary structure, monomer and homodimer. Interacts with CXADR. Interacts presynaptically with the glutamate receptors GRIA2, GRIA3, GRIK3, isoform 3 of GRIA4, isoform A of GRM4, GRM7 and GRM8; with NAPA and NAPB; and with BTG2. The interaction with NAPA and NAPB disrupts the interaction with GRIA2, conducting to the internalization of GRIA2. Interacts with PRKCA; with the amine transporters SLC6A2 and SLC6A3; with the channels ASIC1 and ASIC2; with the GTP-binding proteins ARF1 and ARF3; with the ephrin receptor tyrosine kinases EPHA7, EPHB1 and EPHB2; with ERBB2 and through its PDZ domain with the C-terminal tail of PRLHR. Interacts with UNC5A. Interacts (via AH domain) with NCS1/FREQ; in a calcium-dependent manner. Interacts with F-actin and associates with the ARP2/3 complex. Interacts (via PDZ domain) with ARF1 (activated); the interaction blocks Arp2/3 complex inhibition. Interacts with SORCS3. Phosphorylation at Thr-82 appears to inhibit the interaction with AMPA receptors. In terms of processing, palmitoylation on Cys-414 is essential for long-term synaptic depression (LTD). In terms of tissue distribution, ubiquitous.

The protein resides in the cytoplasm. It localises to the perinuclear region. It is found in the membrane. The protein localises to the postsynaptic density. Its subcellular location is the synapse. The protein resides in the synaptosome. It localises to the cytoskeleton. Probable adapter protein that bind to and organize the subcellular localization of a variety of membrane proteins containing some PDZ recognition sequence. Involved in the clustering of various receptors, possibly by acting at the receptor internalization level. Plays a role in synaptic plasticity by regulating the trafficking and internalization of AMPA receptors. May be regulated upon PRKCA activation. May regulate ASIC1/ASIC3 channel. Regulates actin polymerization by inhibiting the actin-nucleating activity of the Arp2/3 complex; the function is competitive with nucleation promoting factors and is linked to neuronal morphology regulation and AMPA receptor (AMPAR) endocytosis. Via interaction with the Arp2/3 complex involved in regulation of synaptic plasicity of excitatory synapses and required for spine shrinkage during long-term depression (LTD). Involved in regulation of astrocyte morphology, antagonistic to Arp2/3 complex activator WASL/N-WASP function. In Rattus norvegicus (Rat), this protein is PRKCA-binding protein (Pick1).